The following is a 485-amino-acid chain: Transcription factor ETV6 (485 aa).

The segment covering 1-10 (MSETPAQSSI) has biased composition (polar residues). The segment at 1–32 (MSETPAQSSIKQERISYTPPESPVASHRSSTP) is disordered. Lys-11 is subject to N6-acetyllysine; alternate. Lys-11 participates in a covalent cross-link: Glycyl lysine isopeptide (Lys-Gly) (interchain with G-Cter in SUMO2); alternate. Phosphothreonine is present on Thr-18. Ser-22 bears the Phosphoserine mark. A PNT domain is found at 41-125 (ALRMEEDSIH…ELLQHILKQR (85 aa)). The interval 157-210 (NCVQRTPRTPAESVHHNPPTIELLHRPRSPITTNHRPSPDPEQQRPQRSPLDNM) is disordered. Thr-165 carries the post-translational modification Phosphothreonine. Ser-215, Ser-240, and Ser-251 each carry phosphoserine. Residue Lys-284 forms a Glycyl lysine isopeptide (Lys-Gly) (interchain with G-Cter in SUMO2) linkage. Lys-298 carries the N6-acetyllysine; alternate modification. Lys-298 is covalently cross-linked (Glycyl lysine isopeptide (Lys-Gly) (interchain with G-Cter in SUMO2); alternate). Ser-319 carries the phosphoserine modification. The segment at residues 335–416 (RLLWDYVYQL…PGQRLLFRFM (82 aa)) is a DNA-binding region (ETS). Glycyl lysine isopeptide (Lys-Gly) (interchain with G-Cter in SUMO2) cross-links involve residues Lys-399 and Lys-417. The tract at residues 440–485 (EQTYQEDEPTIASPVGWPRGNLPTGTAGGVMEAGELGVAVKEETRE) is disordered.

The protein belongs to the ETS family. As to quaternary structure, can form homodimers or heterodimers with TEL2 or FLI1. Interacts with L3MBTL1 and HDAC9.

Its subcellular location is the nucleus. In terms of biological role, transcriptional repressor; binds to the DNA sequence 5'-CCGGAAGT-3'. Plays a role in hematopoiesis and malignant transformation. This chain is Transcription factor ETV6 (Etv6), found in Mus musculus (Mouse).